We begin with the raw amino-acid sequence, 321 residues long: Anthranilate phosphoribosyltransferase (321 aa).

5-phospho-alpha-D-ribose 1-diphosphate is bound by residues G72, 75–76 (GD), T80, 82–85 (NVST), 99–107 (KHGNVSVTS), and S111. G72 serves as a coordination point for anthranilate. Residue S84 coordinates Mg(2+). N102 contributes to the anthranilate binding site. R157 provides a ligand contact to anthranilate. Mg(2+)-binding residues include D216 and E217.

The protein belongs to the anthranilate phosphoribosyltransferase family. As to quaternary structure, homodimer. Requires Mg(2+) as cofactor.

The enzyme catalyses N-(5-phospho-beta-D-ribosyl)anthranilate + diphosphate = 5-phospho-alpha-D-ribose 1-diphosphate + anthranilate. Its pathway is amino-acid biosynthesis; L-tryptophan biosynthesis; L-tryptophan from chorismate: step 2/5. Catalyzes the transfer of the phosphoribosyl group of 5-phosphorylribose-1-pyrophosphate (PRPP) to anthranilate to yield N-(5'-phosphoribosyl)-anthranilate (PRA). This Methanococcus vannielii (strain ATCC 35089 / DSM 1224 / JCM 13029 / OCM 148 / SB) protein is Anthranilate phosphoribosyltransferase.